We begin with the raw amino-acid sequence, 50 residues long: Inducible serine protease inhibitor 1 (50 aa).

The tract at residues 1-27 is disordered; that stretch reads DLVXGTNFXKNNPXSTRVAANSXRSPS. Over residues 8–25 the composition is skewed to polar residues; the sequence is FXKNNPXSTRVAANSXRS.

Functionally, inhibits trypsin and the toxin protease PR2 of M.anisopliae. Does not inhibit chymotrypsin, subtilisin Carlsberg, proteinase K, porcine pancreatic elastase and the toxin protease PR1 of M.anisopliae. In Galleria mellonella (Greater wax moth), this protein is Inducible serine protease inhibitor 1.